The sequence spans 393 residues: 4-hydroxyphenylpyruvate dioxygenase (393 aa).

N-acetylthreonine is present on Thr2. VOC domains follow at residues 18 to 152 (HFHS…KMTF) and 180 to 338 (IIDH…IFTK). Residue His183 participates in Fe cation binding. A phosphoserine mark is found at Ser211, Ser226, and Ser250. Fe cation-binding residues include His266 and Glu349.

The protein belongs to the 4HPPD family. In terms of assembly, homodimer. Fe cation is required as a cofactor. Liver.

The protein resides in the cytoplasm. It localises to the endoplasmic reticulum membrane. The protein localises to the golgi apparatus membrane. It carries out the reaction 3-(4-hydroxyphenyl)pyruvate + O2 = homogentisate + CO2. Its pathway is amino-acid degradation; L-phenylalanine degradation; acetoacetate and fumarate from L-phenylalanine: step 3/6. Its function is as follows. Catalyzes the conversion of 4-hydroxyphenylpyruvic acid to homogentisic acid, one of the steps in tyrosine catabolism. The chain is 4-hydroxyphenylpyruvate dioxygenase (HPD) from Sus scrofa (Pig).